A 520-amino-acid polypeptide reads, in one-letter code: 3-phosphoshikimate 1-carboxyvinyltransferase, chloroplastic (520 aa).

A chloroplast-targeting transit peptide spans 1–76 (MAQVSRICNG…KVMSSVSTAE (76 aa)). The tract at residues 20-39 (LSKSSQRKSPLSVSLKTQQH) is disordered. Residues K99, S100, and R104 each coordinate 3-phosphoshikimate. K99 contacts phosphoenolpyruvate. G177 and R207 together coordinate phosphoenolpyruvate. Residues S254, S255, Q256, S282, D407, and K434 each contribute to the 3-phosphoshikimate site. Q256 lines the phosphoenolpyruvate pocket. D407 serves as the catalytic Proton acceptor. 3 residues coordinate phosphoenolpyruvate: R438, R480, and K505.

Belongs to the EPSP synthase family.

It localises to the plastid. The protein localises to the chloroplast. The catalysed reaction is 3-phosphoshikimate + phosphoenolpyruvate = 5-O-(1-carboxyvinyl)-3-phosphoshikimate + phosphate. It participates in metabolic intermediate biosynthesis; chorismate biosynthesis; chorismate from D-erythrose 4-phosphate and phosphoenolpyruvate: step 6/7. Its function is as follows. Catalyzes the transfer of the enolpyruvyl moiety of phosphoenolpyruvate (PEP) to the 5-hydroxyl of shikimate-3-phosphate (S3P) to produce enolpyruvyl shikimate-3-phosphate and inorganic phosphate. This Arabidopsis thaliana (Mouse-ear cress) protein is 3-phosphoshikimate 1-carboxyvinyltransferase, chloroplastic.